Reading from the N-terminus, the 262-residue chain is Glycine and serine-rich protein 1 (262 aa).

Positions methionine 1–cysteine 21 are cleaved as a signal peptide. N-linked (GlcNAc...) asparagine glycosylation occurs at asparagine 59. The interval serine 172 to methionine 212 is disordered. A compositionally biased stretch (gly residues) spans glycine 174–glycine 184. Positions glycine 185 to glycine 203 are enriched in low complexity.

In terms of tissue distribution, component of the acid-insoluble and acid-soluble organic matrix of calcified layers of the shell (at protein level).

The protein localises to the secreted. The chain is Glycine and serine-rich protein 1 from Lottia gigantea (Giant owl limpet).